The following is a 643-amino-acid chain: E3 ubiquitin-protein ligase AMFR (643 aa).

Residues 39-67 form a disordered region; sequence PEAGPGEPDQLTASLQPEPPAPARPSAGG. Transmembrane regions (helical) follow at residues 82–102, 122–142, 145–165, 186–206, 215–235, and 276–296; these read LFVWVLVNTACCVLMLVAKLI, FWNFIFYKFIFIFGVLNVQTV, VVMWCLWFAGLVFLHLMVQLC, VLSLLVAMLLSCCGLAAVCSI, TLAFMAAESLLVTVRTAHVIL, and HIHMLLFGNIWLSMASLVIFM. An RING-type zinc finger spans residues 341 to 379; sequence CAICWDSMQAARKLPCGHLFHNSCLRSWLEQDTSCPTCR. The helical transmembrane segment at 429–449 threads the bilayer; it reads IASWLPSFSVEVMHTTNILGI. In terms of domain architecture, CUE spans 456–498; that stretch reads QLNAMAHQIQEMFPQVPYHLVLQDLQLTRSVEITTDNILEGRI. 2 disordered regions span residues 504–579 and 596–624; these read TQRS…DERQ and RFLNKSSEDDAASESFLPSEGASSDPVTL. Phosphoserine is present on residues serine 516, serine 523, and serine 542. The segment covering 548-563 has biased composition (acidic residues); that stretch reads TLDFGEVEVEPSEVED. Basic and acidic residues predominate over residues 564–579; that stretch reads FEARGSRFSKSADERQ. A VCP/p97-interacting motif (VIM) region spans residues 622–640; the sequence is VTLRRRMLAAAAERRLQKQ.

In terms of assembly, interacts with RNF5. Also forms an ERAD complex containing VCP/p97, NGLY1; PSMC1; SAKS1 and RAD23B required for coupling retrotranslocation, ubiquitination and deglycosylation. Interacts with DERL1. Interacts (through a region distinct from the RING finger) with UBE2G2/UBC7. Component of the VCP/p97-AMFR/gp78 complex that enhances VCP/p97 binding to polyubiquitinated proteins for their degradation by the endoplasmic reticulum-associated degradation (ERAD) pathway. Interacts (via the VIM) with VCP/p97. Interacts (via its membrane domain) with INSIG1; the interaction initiates the sterol-mediated ubiquitination and degradation of HMGCR by the ERAD pathway. Interacts with AUP1, UBE2G2 and RNF139/TRC8; interaction with AUP1 facilitates interaction of AMFR with ubiquitin-conjugating enzyme UBE2G2 and ubiquitin ligase RNF139, leading to sterol-induced ubiquitination of HMGCR and its subsequent proteasomal degradation. Interacts with BAG6. Interacts with USP13 (via UBA 2 domain); the interaction is direct. Interacts with LMBR1L. Interacts with UBAC2 and CTNNB1. Interacts with C18orf32. As to quaternary structure, (Microbial infection) Interacts with Staphylococcus aureus HIgB; this interaction regulates AMFR-mediated inflammation by promoting TAB3 ubiquitination to promote TAB3-TAK1 complex formation. Post-translationally, palmitoylation of the RING-type zing finger by ZDHHC6 promotes localization to the peripheral endoplasmic reticulum. In terms of tissue distribution, widely expressed.

The protein localises to the endoplasmic reticulum membrane. It catalyses the reaction [E2 ubiquitin-conjugating enzyme]-S-ubiquitinyl-L-cysteine + [acceptor protein]-L-cysteine = [E2 ubiquitin-conjugating enzyme]-L-cysteine + [acceptor protein]-S-ubiquitinyl-L-cysteine.. It participates in protein modification; protein ubiquitination. Its function is as follows. E3 ubiquitin-protein ligase that mediates the polyubiquitination of lysine and cysteine residues on target proteins, such as CD3D, CYP3A4, CFTR, INSIG1, SOAT2/ACAT2 and APOB for proteasomal degradation. Component of a VCP/p97-AMFR/gp78 complex that participates in the final step of endoplasmic reticulum-associated degradation (ERAD). The VCP/p97-AMFR/gp78 complex is involved in the sterol-accelerated ERAD degradation of HMGCR through binding to the HMGCR-INSIG1 complex at the ER membrane. In addition, interaction of AMFR with AUP1 facilitates interaction of AMFR with ubiquitin-conjugating enzyme UBE2G2 and ubiquitin ligase RNF139, leading to sterol-induced HMGCR ubiquitination. The ubiquitinated HMGCR is then released from the ER into the cytosol for subsequent destruction. In addition to ubiquitination on lysine residues, catalyzes ubiquitination on cysteine residues: together with INSIG1, mediates polyubiquitination of SOAT2/ACAT2 at 'Cys-277', leading to its degradation when the lipid levels are low. Catalyzes ubiquitination and subsequent degradation of INSIG1 when cells are depleted of sterols. Mediates polyubiquitination of INSIG2 at 'Cys-215' in some tissues, leading to its degradation. Also regulates ERAD through the ubiquitination of UBL4A a component of the BAG6/BAT3 complex. Also acts as a scaffold protein to assemble a complex that couples ubiquitination, retranslocation and deglycosylation. Mediates tumor invasion and metastasis as a receptor for the GPI/autocrine motility factor. In association with LMBR1L and UBAC2, negatively regulates the canonical Wnt signaling pathway in the lymphocytes by promoting the ubiquitin-mediated degradation of CTNNB1 and Wnt receptors FZD6 and LRP6. Regulates NF-kappa-B and MAPK signaling pathways by mediating 'Lys-27'-linked polyubiquitination of TAB3 and promoting subsequent TAK1/MAP3K7 activation. Required for proper lipid homeostasis. This chain is E3 ubiquitin-protein ligase AMFR, found in Homo sapiens (Human).